We begin with the raw amino-acid sequence, 336 residues long: Mitochondrial amidoxime reducing component 2 (336 aa).

Residues 1–35 (MGAAGSSALARLGLPALPGPRWLGVAALGLAAVAL) constitute a mitochondrion transit peptide. Glycyl lysine isopeptide (Lys-Gly) (interchain with G-Cter in ubiquitin) cross-links involve residues K138, K144, K173, K187, K287, and K294. The 147-residue stretch at 188–334 (ARASNEIFPS…LKVGDPVYQM (147 aa)) folds into the MOSC domain.

In terms of assembly, component of a complex composed of cytochrome b5, NADH-cytochrome b5 reductase (CYB5R3) and MTARC2. Mo-molybdopterin serves as cofactor. Post-translationally, ubiquitinated by PRKN during mitophagy, leading to its degradation and enhancement of mitophagy. Deubiquitinated by USP30.

Its subcellular location is the mitochondrion outer membrane. It is found in the peroxisome. The enzyme catalyses N(omega)-hydroxy-L-arginine + 2 Fe(II)-[cytochrome b5] + 2 H(+) = L-arginine + 2 Fe(III)-[cytochrome b5] + H2O. In terms of biological role, catalyzes the reduction of N-oxygenated molecules, acting as a counterpart of cytochrome P450 and flavin-containing monooxygenases in metabolic cycles. As a component of prodrug-converting system, reduces a multitude of N-hydroxylated prodrugs particularly amidoximes, leading to increased drug bioavailability. May be involved in mitochondrial N(omega)-hydroxy-L-arginine (NOHA) reduction, regulating endogenous nitric oxide levels and biosynthesis. Postulated to cleave the N-OH bond of N-hydroxylated substrates in concert with electron transfer from NADH to cytochrome b5 reductase then to cytochrome b5, the ultimate electron donor that primes the active site for substrate reduction. The sequence is that of Mitochondrial amidoxime reducing component 2 (MTARC2) from Bos taurus (Bovine).